The sequence spans 234 residues: Opacity protein opA56 (234 aa).

Residue Ala1 is a signal peptide.

The protein belongs to the opacity porin family.

It is found in the cell outer membrane. Implicated in a number of adherence functions. OPA proteins are implicated in pathogenesis and are subject to phase variation. The sequence is that of Opacity protein opA56 (opaF) from Neisseria gonorrhoeae.